The chain runs to 673 residues: uncharacterized protein (673 aa).

The tract at residues 1 to 95 is disordered; the sequence is MLNGEKSALG…QSSAIADSIG (95 aa). The span at 13 to 40 shows a compositional bias: low complexity; that stretch reads PSNSNSSSKLNAKSPNFIPSSSNIPRSS. Basic and acidic residues predominate over residues 42 to 60; that stretch reads KTKEHSADRKPHRNSEKKT. The RING-type zinc finger occupies 214–273; the sequence is CPFCLEEKPVAARMSRCGHVYCFSCLLRFVETPTAAEVKAAETSGTKIVKCGHRSCPICW. The interval 649–673 is disordered; that stretch reads SAPSKNSKNKKKKKLVLLSTGAAHR.

It localises to the cytoplasm. Its subcellular location is the nucleus. This is an uncharacterized protein from Schizosaccharomyces pombe (strain 972 / ATCC 24843) (Fission yeast).